The sequence spans 450 residues: Probable ECA polymerase (450 aa).

11 consecutive transmembrane segments (helical) span residues 6 to 26 (FSGLFVVWLLCTLFIATLTWF), 37 to 57 (VFFSLLFLLTFFFGFPLTSVL), 63 to 83 (VGVAPPEILLQALLSAGCFYA), 118 to 138 (VILMGIALVSVGIFFMHNGFL), 155 to 175 (GVALKRFFYFFIPAMLVVYFL), 181 to 201 (AWLFFLVSTVAFGLLTYMIVG), 207 to 227 (IIIAFAIFLFIGIIRGWISLW), 228 to 248 (MLAAAGVLGIVGMFWLALKRY), 341 to 361 (LVVMGGALFIPLGAIVVGLII), 378 to 398 (YKAAILHSFCFGAIFNMIVLA), and 410 to 430 (VFFIVVFGACLMIAKLLYWLF).

The protein belongs to the WzyE family. Probably part of a complex composed of WzxE, WzyE and WzzE.

The protein resides in the cell inner membrane. It participates in bacterial outer membrane biogenesis; enterobacterial common antigen biosynthesis. Its function is as follows. Probably involved in the polymerization of enterobacterial common antigen (ECA) trisaccharide repeat units. The protein is Probable ECA polymerase of Escherichia coli O7:K1 (strain IAI39 / ExPEC).